Reading from the N-terminus, the 1340-residue chain is Early transcription factor large subunit homolog (1340 aa).

The protein resides in the virion. Functionally, putative initation factor. The polypeptide is Early transcription factor large subunit homolog (Ornithodoros (relapsing fever ticks)).